Here is a 94-residue protein sequence, read N- to C-terminus: Evasin P1172 (94 aa).

3 disulfides stabilise this stretch: Cys-35–Cys-54, Cys-39–Cys-56, and Cys-50–Cys-67. Asn-38, Asn-44, Asn-53, and Asn-80 each carry an N-linked (GlcNAc...) asparagine glycan.

The protein localises to the secreted. Salivary chemokine-binding protein which binds to host chemokines CXCL1, CXCL2, CXCL5 and CXCL8. The sequence is that of Evasin P1172 from Ixodes ricinus (Common tick).